The following is a 186-amino-acid chain: Elongation factor P (186 aa).

This sequence belongs to the elongation factor P family.

The protein localises to the cytoplasm. It functions in the pathway protein biosynthesis; polypeptide chain elongation. Functionally, involved in peptide bond synthesis. Stimulates efficient translation and peptide-bond synthesis on native or reconstituted 70S ribosomes in vitro. Probably functions indirectly by altering the affinity of the ribosome for aminoacyl-tRNA, thus increasing their reactivity as acceptors for peptidyl transferase. This Maridesulfovibrio salexigens (strain ATCC 14822 / DSM 2638 / NCIMB 8403 / VKM B-1763) (Desulfovibrio salexigens) protein is Elongation factor P.